A 703-amino-acid polypeptide reads, in one-letter code: Protein CNGC15c (703 aa).

The segment covering 1 to 10 (MGFDNPRSER) has biased composition (basic and acidic residues). Positions 1–23 (MGFDNPRSERFEDDPEISKIPTT) are disordered. Transmembrane regions (helical) follow at residues 91–111 (IFLVACLVSLFVDPLFFYLPV), 179–199 (GFWLDFIAALPLPQVLIWIII), 216–236 (FFIIFQYIPRLYLIFPLSSQI), 255–275 (LMLYMLASHILGACWYLLSIE), and 372–392 (FIGEIMVAIVVATLGLVLFAL). An a nucleoside 3',5'-cyclic phosphate-binding site is contributed by 480–565 (LFDQMDERML…WALDPRPSVI (86 aa)). The IQ domain maps to 616–644 (RTWAACFIQAAWRRHKKRKEAAELRAKEN). Residues 676–703 (KGVNMHSGTNSGVVSSLQKPTEPDFSDE) form a disordered region. The segment covering 681–694 (HSGTNSGVVSSLQK) has biased composition (polar residues).

The protein belongs to the cyclic nucleotide-gated cation channel (TC 1.A.1.5) family. As to quaternary structure, interacts (via N-terminus) with DMI1 (via c-terminus). The Nod factor has no effect on this interaction, implying that the complex is maintained after activation. In terms of tissue distribution, expressed in roots, stems, leaves, flowers and pods.

The protein localises to the nucleus membrane. Its function is as follows. Cyclic nucleotide-gated channel involved in the establishment of both rhizobial and mycorrhizal associations. Required for full activation of nuclear-localized Ca(2+) oscillations by Nod and Myc factors. Simultaneous activation of the K(+)-permeable channel DMI1 and the Ca(2+) channel CNGC15 can give rise to sustained Ca(2+) oscillations. May function during fertilization in both female and male gametophytic Ca(2+) signaling. The sequence is that of Protein CNGC15c from Medicago truncatula (Barrel medic).